Reading from the N-terminus, the 196-residue chain is Imidazoleglycerol-phosphate dehydratase (196 aa).

The protein belongs to the imidazoleglycerol-phosphate dehydratase family.

It localises to the cytoplasm. It carries out the reaction D-erythro-1-(imidazol-4-yl)glycerol 3-phosphate = 3-(imidazol-4-yl)-2-oxopropyl phosphate + H2O. Its pathway is amino-acid biosynthesis; L-histidine biosynthesis; L-histidine from 5-phospho-alpha-D-ribose 1-diphosphate: step 6/9. The chain is Imidazoleglycerol-phosphate dehydratase from Moorella thermoacetica (strain ATCC 39073 / JCM 9320).